The following is an 809-amino-acid chain: ATP-dependent zinc metalloprotease FTSH 3, mitochondrial (809 aa).

A mitochondrion-targeting transit peptide spans 1–83 (MTMIFFSKLN…FANPRLRRFF (83 aa)). Residues 93 to 121 (YENYFPKDKQEPKSDQKSEHKEGSEKNEN) are compositionally biased toward basic and acidic residues. Residues 93–122 (YENYFPKDKQEPKSDQKSEHKEGSEKNENE) form a disordered region. A helical transmembrane segment spans residues 132–152 (FQNLLIPLLALAVFFSTFSFG). ATP is bound at residue 362 to 369 (GPPGTGKT). Residue histidine 586 participates in Zn(2+) binding. Residue glutamate 587 is part of the active site. Zn(2+)-binding residues include histidine 590 and aspartate 662. The tract at residues 776–809 (GFEETEKDSAATPTVEPVVDDGAPPPFEPQVVPT) is disordered.

In the N-terminal section; belongs to the AAA ATPase family. The protein in the C-terminal section; belongs to the peptidase M41 family. The cofactor is Zn(2+).

It localises to the mitochondrion inner membrane. In terms of biological role, probable ATP-dependent zinc metallopeptidase. Involved in the assembly and/or stability of the complexes I and V of the mitochondrial oxidative phosphorylation system. The sequence is that of ATP-dependent zinc metalloprotease FTSH 3, mitochondrial (FTSH3) from Arabidopsis thaliana (Mouse-ear cress).